Reading from the N-terminus, the 944-residue chain is Leucine--tRNA ligase (944 aa).

The 'HIGH' region motif lies at P40 to H51. Residues K718–S722 carry the 'KMSKS' region motif. K721 is a binding site for ATP.

It belongs to the class-I aminoacyl-tRNA synthetase family.

Its subcellular location is the cytoplasm. It catalyses the reaction tRNA(Leu) + L-leucine + ATP = L-leucyl-tRNA(Leu) + AMP + diphosphate. This Phocaeicola vulgatus (strain ATCC 8482 / DSM 1447 / JCM 5826 / CCUG 4940 / NBRC 14291 / NCTC 11154) (Bacteroides vulgatus) protein is Leucine--tRNA ligase.